Here is a 144-residue protein sequence, read N- to C-terminus: ATP synthase epsilon chain (144 aa).

The protein belongs to the ATPase epsilon chain family. In terms of assembly, F-type ATPases have 2 components, CF(1) - the catalytic core - and CF(0) - the membrane proton channel. CF(1) has five subunits: alpha(3), beta(3), gamma(1), delta(1), epsilon(1). CF(0) has three main subunits: a, b and c.

The protein localises to the cell inner membrane. In terms of biological role, produces ATP from ADP in the presence of a proton gradient across the membrane. The chain is ATP synthase epsilon chain from Ectopseudomonas mendocina (strain ymp) (Pseudomonas mendocina).